The chain runs to 244 residues: Small ribosomal subunit protein eS4 (244 aa).

The 64-residue stretch at 43–106 (LPLLLIVRDT…NENYLVLFDE (64 aa)) folds into the S4 RNA-binding domain.

This sequence belongs to the eukaryotic ribosomal protein eS4 family.

This is Small ribosomal subunit protein eS4 (rps4e) from Methanococcus vannielii.